The chain runs to 111 residues: U-scoloptoxin(16)-Sm2a (111 aa).

The first 28 residues, 1–28, serve as a signal peptide directing secretion; the sequence is MCAKPNHLFVTVTFIFGFAVCIVQISAW.

Belongs to the scoloptoxin-16 family. In terms of processing, contains 4 disulfide bonds. In terms of tissue distribution, expressed by the venom gland.

The protein localises to the secreted. The protein is U-scoloptoxin(16)-Sm2a of Scolopendra morsitans (Tanzanian blue ringleg centipede).